A 426-amino-acid chain; its full sequence is Enolase (426 aa).

(2R)-2-phosphoglycerate is bound at residue Gln-163. Glu-205 functions as the Proton donor in the catalytic mechanism. Asp-242, Glu-283, and Asp-310 together coordinate Mg(2+). Residues Lys-335, Arg-364, Ser-365, and Lys-386 each coordinate (2R)-2-phosphoglycerate. The active-site Proton acceptor is the Lys-335.

The protein belongs to the enolase family. It depends on Mg(2+) as a cofactor.

It is found in the cytoplasm. It localises to the secreted. Its subcellular location is the cell surface. The enzyme catalyses (2R)-2-phosphoglycerate = phosphoenolpyruvate + H2O. It functions in the pathway carbohydrate degradation; glycolysis; pyruvate from D-glyceraldehyde 3-phosphate: step 4/5. Catalyzes the reversible conversion of 2-phosphoglycerate (2-PG) into phosphoenolpyruvate (PEP). It is essential for the degradation of carbohydrates via glycolysis. The protein is Enolase of Leifsonia xyli subsp. xyli (strain CTCB07).